Consider the following 147-residue polypeptide: Hemoglobin subunit epsilon (147 aa).

The Globin domain occupies 3-147 (HFTAEEKAAI…VAIALGHKYH (145 aa)). A phosphoserine mark is found at S14 and S51. Heme b is bound by residues H64 and H93.

Belongs to the globin family. In terms of assembly, heterotetramer of two alpha chains and two epsilon chains in early embryonic hemoglobin Gower-2; two zeta chains and two epsilon chains in early embryonic hemoglobin Gower-1. In terms of tissue distribution, red blood cells.

The epsilon chain is a beta-type chain of early mammalian embryonic hemoglobin. In Leontopithecus rosalia (Golden lion tamarin), this protein is Hemoglobin subunit epsilon (HBE1).